The primary structure comprises 429 residues: Glutamate-1-semialdehyde 2,1-aminomutase 1 (429 aa).

An N6-(pyridoxal phosphate)lysine modification is found at Lys267.

Belongs to the class-III pyridoxal-phosphate-dependent aminotransferase family. HemL subfamily. In terms of assembly, homodimer. Pyridoxal 5'-phosphate serves as cofactor.

The protein localises to the cytoplasm. The catalysed reaction is (S)-4-amino-5-oxopentanoate = 5-aminolevulinate. The protein operates within porphyrin-containing compound metabolism; protoporphyrin-IX biosynthesis; 5-aminolevulinate from L-glutamyl-tRNA(Glu): step 2/2. This chain is Glutamate-1-semialdehyde 2,1-aminomutase 1, found in Bacillus velezensis (strain DSM 23117 / BGSC 10A6 / LMG 26770 / FZB42) (Bacillus amyloliquefaciens subsp. plantarum).